A 306-amino-acid polypeptide reads, in one-letter code: UDP-3-O-acyl-N-acetylglucosamine deacetylase (306 aa).

3 residues coordinate Zn(2+): H79, H238, and D242. H265 functions as the Proton donor in the catalytic mechanism.

The protein belongs to the LpxC family. Zn(2+) is required as a cofactor.

The catalysed reaction is a UDP-3-O-[(3R)-3-hydroxyacyl]-N-acetyl-alpha-D-glucosamine + H2O = a UDP-3-O-[(3R)-3-hydroxyacyl]-alpha-D-glucosamine + acetate. It participates in glycolipid biosynthesis; lipid IV(A) biosynthesis; lipid IV(A) from (3R)-3-hydroxytetradecanoyl-[acyl-carrier-protein] and UDP-N-acetyl-alpha-D-glucosamine: step 2/6. Catalyzes the hydrolysis of UDP-3-O-myristoyl-N-acetylglucosamine to form UDP-3-O-myristoylglucosamine and acetate, the committed step in lipid A biosynthesis. The polypeptide is UDP-3-O-acyl-N-acetylglucosamine deacetylase (Shewanella loihica (strain ATCC BAA-1088 / PV-4)).